Here is a 166-residue protein sequence, read N- to C-terminus: Monothiol glutaredoxin-3 (166 aa).

The 104-residue stretch at 56-159 folds into the Glutaredoxin domain; the sequence is DSTDFEVFLE…STLDEWTHNK (104 aa). Residue C76 participates in [2Fe-2S] cluster binding.

It belongs to the glutaredoxin family. Monothiol subfamily. As to quaternary structure, homodimer.

The protein localises to the nucleus. Monothiol glutaredoxin involved in the biogenesis of iron-sulfur clusters. Binds one iron-sulfur cluster per dimer. The iron-sulfur cluster is bound between subunits, and is complexed by a bound glutathione and a cysteine residue from each subunit. The sequence is that of Monothiol glutaredoxin-3 (grx3) from Schizosaccharomyces pombe (strain 972 / ATCC 24843) (Fission yeast).